Reading from the N-terminus, the 89-residue chain is MSDNNEKQTLRTVEGRVVSNKMDKTVTVLVERQVKHALYGKYIKRSTKLHAHDADNACNEGDVVRVTEIAPMSKTKNWRVVEIVTRSAE.

It belongs to the universal ribosomal protein uS17 family. As to quaternary structure, part of the 30S ribosomal subunit.

Functionally, one of the primary rRNA binding proteins, it binds specifically to the 5'-end of 16S ribosomal RNA. The protein is Small ribosomal subunit protein uS17 of Xanthomonas axonopodis pv. citri (strain 306).